We begin with the raw amino-acid sequence, 376 residues long: Phosphoserine aminotransferase (376 aa).

Residue R54 participates in L-glutamate binding. Residues 88-89, W115, T165, D186, and Q209 each bind pyridoxal 5'-phosphate; that span reads AT. Position 210 is an N6-(pyridoxal phosphate)lysine (K210). 251-252 is a pyridoxal 5'-phosphate binding site; the sequence is NT.

The protein belongs to the class-V pyridoxal-phosphate-dependent aminotransferase family. SerC subfamily. In terms of assembly, homodimer. It depends on pyridoxal 5'-phosphate as a cofactor.

It localises to the cytoplasm. The enzyme catalyses O-phospho-L-serine + 2-oxoglutarate = 3-phosphooxypyruvate + L-glutamate. It carries out the reaction 4-(phosphooxy)-L-threonine + 2-oxoglutarate = (R)-3-hydroxy-2-oxo-4-phosphooxybutanoate + L-glutamate. Its pathway is amino-acid biosynthesis; L-serine biosynthesis; L-serine from 3-phospho-D-glycerate: step 2/3. It functions in the pathway cofactor biosynthesis; pyridoxine 5'-phosphate biosynthesis; pyridoxine 5'-phosphate from D-erythrose 4-phosphate: step 3/5. Functionally, catalyzes the reversible conversion of 3-phosphohydroxypyruvate to phosphoserine and of 3-hydroxy-2-oxo-4-phosphonooxybutanoate to phosphohydroxythreonine. This Rhodopirellula baltica (strain DSM 10527 / NCIMB 13988 / SH1) protein is Phosphoserine aminotransferase.